Here is a 262-residue protein sequence, read N- to C-terminus: Adenosylcobinamide-GDP ribazoletransferase (262 aa).

7 helical membrane passes run 37–57 (SMPLAGAAIGALAAGTYALCS), 58–78 (MFSFGTPLFLALFLLWLGIWL), 112–132 (VGAFAVLSLACLLSFRWLFLY), 139–159 (IPPALFVAIPLLSRSGAAWLL), 183–203 (AVWALVLAFLALSLLLVFGGV), 205–225 (VWTSAALAVAMALLALGAKPW), and 237–257 (VLGALIEGGETLLWGVVWLLH).

Belongs to the CobS family. It depends on Mg(2+) as a cofactor.

It is found in the cell membrane. The catalysed reaction is alpha-ribazole + adenosylcob(III)inamide-GDP = adenosylcob(III)alamin + GMP + H(+). The enzyme catalyses alpha-ribazole 5'-phosphate + adenosylcob(III)inamide-GDP = adenosylcob(III)alamin 5'-phosphate + GMP + H(+). It functions in the pathway cofactor biosynthesis; adenosylcobalamin biosynthesis; adenosylcobalamin from cob(II)yrinate a,c-diamide: step 7/7. Functionally, joins adenosylcobinamide-GDP and alpha-ribazole to generate adenosylcobalamin (Ado-cobalamin). Also synthesizes adenosylcobalamin 5'-phosphate from adenosylcobinamide-GDP and alpha-ribazole 5'-phosphate. This chain is Adenosylcobinamide-GDP ribazoletransferase, found in Geobacillus thermodenitrificans (strain NG80-2).